Consider the following 655-residue polypeptide: SRSF protein kinase 1 (655 aa).

Residues 1–57 (MERKVLALQARKKRTKAKKDKAQRKSETQHRGSAPHSESDLPEQEEEILGSDDDEQE) form a disordered region. Residues 10–22 (ARKKRTKAKKDKA) are compositionally biased toward basic residues. Residues 40–57 (DLPEQEEEILGSDDDEQE) show a composition bias toward acidic residues. A Phosphoserine; by CK2 modification is found at Ser51. Residues 80–653 (YHVIRKLGWG…AAECLRHPWL (574 aa)) enclose the Protein kinase domain. ATP-binding positions include 86-94 (LGWGHFSTV), Lys109, and 166-168 (EVL). Asp213 functions as the Proton acceptor in the catalytic mechanism. 2 disordered regions span residues 238–341 (WQRS…QDQT) and 397–417 (FLSS…CTPI). Over residues 265-276 (KNKKKKLKKKQK) the composition is skewed to basic residues. Basic and acidic residues-rich tracts occupy residues 277-288 (RQAELLEKRMQE) and 304-318 (NKQE…RPLK). Phosphoserine is present on residues Ser309, Ser311, and Ser333. Phosphoserine; by CK2 is present on Ser555.

Belongs to the protein kinase superfamily. CMGC Ser/Thr protein kinase family. Monomer. Isoform 2 is found in a multisubunit complex containing seven proteins, named toposome, which separates entangled circular chromatin DNA during chromosome segregation. Isoform 2 interacts with DNAJC8 and AHSA1/AHA1 and this mediates formation of a complex with the Hsp70 /Hsp90 machinery. Isoform 1 is found in a complex with: DHX9, MOV10, MATR3, HNRNPU, NCL, DDX21, HSD17B4, PABPC1, HNRNPM, IGF2BP1, SYNCRIP, RPL3, VIM, YBX1, NPM1, HNRNPA2B1, HNRNPC, RPLP0, RPL7A and RALY. Isoform 2 binds to IGF2BP1, SYNCRIP, HNRNPA2B1 and HNRNPC. Isoform 1 and isoform 2 interact with SAFB which inhibits its activity. Isoform 2 interacts with SAFB2 which inhibits its activity. As to quaternary structure, (Microbial infection) Isoform 2 interacts with HHV-1 ICP27 protein. The cofactor is Mg(2+). As to expression, isoform 2 is predominantly expressed in the testis but is also present at lower levels in heart, ovary, small intestine, liver, kidney, pancreas and skeletal muscle. Isoform 1 is only seen in the testis, at lower levels than isoform 2. Highly expressed in different erythroid and lymphoid cell lines, with isoform 2 being far more abundant than isoform 1.

It localises to the cytoplasm. The protein localises to the nucleus. The protein resides in the nucleus matrix. It is found in the microsome. Its subcellular location is the nucleoplasm. It localises to the nucleus speckle. The protein localises to the chromosome. It carries out the reaction L-seryl-[protein] + ATP = O-phospho-L-seryl-[protein] + ADP + H(+). The enzyme catalyses L-threonyl-[protein] + ATP = O-phospho-L-threonyl-[protein] + ADP + H(+). With respect to regulation, activated by phosphorylation on Ser-51 and Ser-555. In terms of biological role, serine/arginine-rich protein-specific kinase which specifically phosphorylates its substrates at serine residues located in regions rich in arginine/serine dipeptides, known as RS domains and is involved in the phosphorylation of SR splicing factors and the regulation of splicing. Plays a central role in the regulatory network for splicing, controlling the intranuclear distribution of splicing factors in interphase cells and the reorganization of nuclear speckles during mitosis. Can influence additional steps of mRNA maturation, as well as other cellular activities, such as chromatin reorganization in somatic and sperm cells and cell cycle progression. Isoform 2 phosphorylates SFRS2, ZRSR2, LBR and PRM1. Isoform 2 phosphorylates SRSF1 using a directional (C-terminal to N-terminal) and a dual-track mechanism incorporating both processive phosphorylation (in which the kinase stays attached to the substrate after each round of phosphorylation) and distributive phosphorylation steps (in which the kinase and substrate dissociate after each phosphorylation event). The RS domain of SRSF1 binds first to a docking groove in the large lobe of the kinase domain of SRPK1. This induces certain structural changes in SRPK1 and/or RRM2 domain of SRSF1, allowing RRM2 to bind the kinase and initiate phosphorylation. The cycles continue for several phosphorylation steps in a processive manner (steps 1-8) until the last few phosphorylation steps (approximately steps 9-12). During that time, a mechanical stress induces the unfolding of the beta-4 motif in RRM2, which then docks at the docking groove of SRPK1. This also signals RRM2 to begin to dissociate, which facilitates SRSF1 dissociation after phosphorylation is completed. Isoform 2 can mediate hepatitis B virus (HBV) core protein phosphorylation. It plays a negative role in the regulation of HBV replication through a mechanism not involving the phosphorylation of the core protein but by reducing the packaging efficiency of the pregenomic RNA (pgRNA) without affecting the formation of the viral core particles. Isoform 1 and isoform 2 can induce splicing of exon 10 in MAPT/TAU. The ratio of isoform 1/isoform 2 plays a decisive role in determining cell fate in K-562 leukaemic cell line: isoform 2 favors proliferation where as isoform 1 favors differentiation. The polypeptide is SRSF protein kinase 1 (Homo sapiens (Human)).